The chain runs to 151 residues: Transcription antitermination protein NusB (151 aa).

This sequence belongs to the NusB family.

Involved in transcription antitermination. Required for transcription of ribosomal RNA (rRNA) genes. Binds specifically to the boxA antiterminator sequence of the ribosomal RNA (rrn) operons. The chain is Transcription antitermination protein NusB from Thermodesulfovibrio yellowstonii (strain ATCC 51303 / DSM 11347 / YP87).